We begin with the raw amino-acid sequence, 188 residues long: Elongation factor P (188 aa).

Belongs to the elongation factor P family.

Its subcellular location is the cytoplasm. The protein operates within protein biosynthesis; polypeptide chain elongation. In terms of biological role, involved in peptide bond synthesis. Stimulates efficient translation and peptide-bond synthesis on native or reconstituted 70S ribosomes in vitro. Probably functions indirectly by altering the affinity of the ribosome for aminoacyl-tRNA, thus increasing their reactivity as acceptors for peptidyl transferase. The chain is Elongation factor P from Aeromonas hydrophila subsp. hydrophila (strain ATCC 7966 / DSM 30187 / BCRC 13018 / CCUG 14551 / JCM 1027 / KCTC 2358 / NCIMB 9240 / NCTC 8049).